We begin with the raw amino-acid sequence, 371 residues long: DNA repair protein RAD14 (371 aa).

Residues 26 to 48 (LSSDQLNRIESRNEPLKTRPLAV) are disordered. The segment covering 32–42 (NRIESRNEPLK) has biased composition (basic and acidic residues). The Zn(2+) site is built by Cys-191, Cys-194, Cys-213, and Cys-216. A zinc finger spans residues 191–216 (CIECHINIEMDPVLHDVFKLQVCKQC).

This sequence belongs to the XPA family. As to quaternary structure, two monomers bind to kinked/damaged DNA (construct with only the C-terminal DNA-binding domain). Component of the nucleotide excision repair factor 1 (NEF1) complex consisting of RAD1, RAD10 and RAD14.

Its subcellular location is the nucleus. Involved in nucleotide excision repair. Binds specifically to damaged DNA. Required for the incision step. The protein is DNA repair protein RAD14 (RAD14) of Saccharomyces cerevisiae (strain ATCC 204508 / S288c) (Baker's yeast).